A 217-amino-acid chain; its full sequence is MEDRAGEQEQERHSLRLEKLQHWARHRQSGHLLVLAVSQLWLAVVVVPLAVSVACLNSDCHMATALPLGPGASGLLTGTVTLELRRAPRLWKVRAMMIFNTFNLILGFIVVVVEVMKTALGPAPTASSQHAGLLVLELSAEAFTLGGVLVSVHALFLLSQRKPGCCRSQSLHYQELQEGFSELEEVPGLENGPTVASTGANERVGQREQTRAALLPP.

4 consecutive transmembrane segments (helical) span residues 33-53 (LVLA…AVSV), 62-82 (MATA…TVTL), 96-116 (MMIF…VEVM), and 138-158 (LSAE…LFLL). The disordered stretch occupies residues 187 to 217 (PGLENGPTVASTGANERVGQREQTRAALLPP).

It localises to the membrane. The sequence is that of Transmembrane protein 253 (TMEM253) from Homo sapiens (Human).